A 125-amino-acid polypeptide reads, in one-letter code: Alpha-endosulfine (125 aa).

The segment covering 1 to 37 has biased composition (basic and acidic residues); the sequence is MSDKYIGDSHLEETGEEKQDSQEKEAVTPEKAEEQKL. The disordered stretch occupies residues 1 to 52; that stretch reads MSDKYIGDSHLEETGEEKQDSQEKEAVTPEKAEEQKLKAKYPNLGQKPGGSD. Thr-28 is subject to Phosphothreonine; by CDK2. Ser-67 carries the post-translational modification Phosphoserine; by GWL. The segment at 86–107 is disordered; that stretch reads GPDKNLVTGDHIPTPQDLPQRK. At Thr-99 the chain carries Phosphothreonine; by CDK2. Position 109 is a phosphoserine; by PKA (Ser-109).

It belongs to the endosulfine family. In terms of assembly, interacts (when phosphorylated at Ser-67) with ppp2r2d. Phosphorylation at Ser-67 by gwl during mitosis is essential for interaction with PPP2R2D (PR55-delta) and subsequent inactivation of PP2A. Phosphorylated by PKA.

The protein resides in the cytoplasm. In terms of biological role, protein phosphatase inhibitor that specifically inhibits protein phosphatase 2A (PP2A) during mitosis. When phosphorylated at Ser-67 during mitosis, specifically interacts with ppp2r2d (PR55-delta) and inhibits its activity, leading to inactivation of PP2A, an essential condition to keep cyclin-B1-CDK1 activity high during M phase. In Xenopus laevis (African clawed frog), this protein is Alpha-endosulfine (ensa).